A 161-amino-acid chain; its full sequence is Large ribosomal subunit protein uL16 (161 aa).

The protein belongs to the universal ribosomal protein uL16 family.

The sequence is that of Large ribosomal subunit protein uL16 from Methanosphaera stadtmanae (strain ATCC 43021 / DSM 3091 / JCM 11832 / MCB-3).